A 99-amino-acid polypeptide reads, in one-letter code: Large ribosomal subunit protein bL21 (99 aa).

It belongs to the bacterial ribosomal protein bL21 family. In terms of assembly, part of the 50S ribosomal subunit. Contacts protein L20.

Its function is as follows. This protein binds to 23S rRNA in the presence of protein L20. The chain is Large ribosomal subunit protein bL21 from Mesoplasma florum (strain ATCC 33453 / NBRC 100688 / NCTC 11704 / L1) (Acholeplasma florum).